A 292-amino-acid polypeptide reads, in one-letter code: MALIPAVTRLTSSVIRILGCNPSAMTLQGTNTYLLGSGSRRILIDTGDEDVPQYIAHLGDVLQQEKASIDTILLTHWHHDHVGGVKSIVGTKLAEKDCRVFKFGRTDAPDVCPEIPTDIKLHPLAHNQEFTTEGANVRVVHTPGHTTDHVVLAMNEGTLFSGDCILGEGTAVFEDLFEYMKSLEKILDIKPQRIFPGHGNVIEEPIGKIEYYINHRNQREQQILQFFVQRPNENLQAMDVVKVVYKETPENLWPAAAYNVNHHLSKLEKEGKLRVSKSADEEFYVYQPTSAL.

Positions 76, 78, 80, 81, 145, 163, and 198 each coordinate Zn(2+).

The protein belongs to the metallo-beta-lactamase superfamily. Glyoxalase II family.

This chain is Beta-lactamase-like protein 2 homolog, found in Drosophila melanogaster (Fruit fly).